Reading from the N-terminus, the 426-residue chain is UPF0761 membrane protein Nmul_A0452 (426 aa).

Helical transmembrane passes span 48–68 (LLSLVPMLAIGLSVIAAFPAF), 106–126 (LTAIGIAFLGVTALALMLTID), 145–165 (LLIYWSVLTIGPLLIGASLSL), 187–207 (LLRLSPLVLTSIAFSASYLIV), 217–237 (AIAGGVAAAIGFEIMKEGFAF), and 255–275 (IPIFLLWLYLSWLMVLLGAVI).

This sequence belongs to the UPF0761 family.

The protein resides in the cell inner membrane. The protein is UPF0761 membrane protein Nmul_A0452 of Nitrosospira multiformis (strain ATCC 25196 / NCIMB 11849 / C 71).